Consider the following 445-residue polypeptide: Phosphoglucosamine mutase (445 aa).

The active-site Phosphoserine intermediate is the Ser101. The Mg(2+) site is built by Ser101, Asp240, Asp242, and Asp244. Ser101 carries the phosphoserine modification.

Belongs to the phosphohexose mutase family. Requires Mg(2+) as cofactor. Activated by phosphorylation.

The enzyme catalyses alpha-D-glucosamine 1-phosphate = D-glucosamine 6-phosphate. Catalyzes the conversion of glucosamine-6-phosphate to glucosamine-1-phosphate. The chain is Phosphoglucosamine mutase from Pseudomonas paraeruginosa (strain DSM 24068 / PA7) (Pseudomonas aeruginosa (strain PA7)).